A 609-amino-acid polypeptide reads, in one-letter code: CTTNBP2 N-terminal-like protein (609 aa).

Residues Met1–Ala10 are compositionally biased toward polar residues. Residues Met1–Ser29 form a disordered region. Coiled coils occupy residues Arg182–Ile264 and Ile303–Gly370. Positions Pro556 to Leu584 are disordered. Residues Ala563–Pro574 are compositionally biased toward pro residues. Ser586 carries the post-translational modification Phosphoserine.

Its subcellular location is the cell projection. It is found in the lamellipodium. It localises to the cytoplasm. The protein resides in the cytoskeleton. The protein localises to the stress fiber. In terms of biological role, regulates lamellipodial actin dynamics in a Cortactin-dependent manner and is therefore likely involved in controlling actin branch density, actin-retrograde flow rates and lamellipodial protrusion. Functions by slowing the dissociation of Cortactin from Arp2/3 nucleated branches thereby increasing branch nucleation and junction stability. Associates with core striatin-interacting phosphatase and kinase (STRIPAK) complex to form CTTNBP2NL-STRIPAK complexes. STRIPAK complexes have critical roles in protein (de)phosphorylation and are regulators of multiple signaling pathways including Hippo, MAPK, nuclear receptor and cytoskeleton remodeling. Different types of STRIPAK complexes are involved in a variety of biological processes such as cell growth, differentiation, apoptosis, metabolism and immune regulation. This is CTTNBP2 N-terminal-like protein from Drosophila melanogaster (Fruit fly).